Reading from the N-terminus, the 216-residue chain is Chaperone protein TorD (216 aa).

The protein belongs to the TorD/DmsD family. TorD subfamily.

The protein resides in the cytoplasm. In terms of biological role, involved in the biogenesis of TorA. Acts on TorA before the insertion of the molybdenum cofactor and, as a result, probably favors a conformation of the apoenzyme that is competent for acquiring the cofactor. This chain is Chaperone protein TorD, found in Ferrimonas balearica (strain DSM 9799 / CCM 4581 / KCTC 23876 / PAT).